A 123-amino-acid polypeptide reads, in one-letter code: Ribulose bisphosphate carboxylase small subunit, chloroplastic 1 (123 aa).

Residue methionine 1 is modified to Methionine derivative.

The protein belongs to the RuBisCO small chain family. In terms of assembly, heterohexadecamer of 8 large and 8 small subunits.

The protein resides in the plastid. Its subcellular location is the chloroplast. In terms of biological role, ruBisCO catalyzes two reactions: the carboxylation of D-ribulose 1,5-bisphosphate, the primary event in carbon dioxide fixation, as well as the oxidative fragmentation of the pentose substrate. Both reactions occur simultaneously and in competition at the same active site. Although the small subunit is not catalytic it is essential for maximal activity. The polypeptide is Ribulose bisphosphate carboxylase small subunit, chloroplastic 1 (Spinacia oleracea (Spinach)).